A 442-amino-acid chain; its full sequence is GTPase Der (442 aa).

EngA-type G domains are found at residues 3–167 and 177–350; these read PTIV…PPDV and PRIA…AAAM. GTP is bound by residues 9 to 16, 56 to 60, 119 to 122, 183 to 190, 230 to 234, and 295 to 298; these read GRPNVGKS, DTAGF, NKSE, DTAGL, and NKWD. The KH-like domain maps to 351–435; that stretch reads VNLSTPRLTR…PLRIQFRTAH (85 aa).

Belongs to the TRAFAC class TrmE-Era-EngA-EngB-Septin-like GTPase superfamily. EngA (Der) GTPase family. Associates with the 50S ribosomal subunit.

Functionally, GTPase that plays an essential role in the late steps of ribosome biogenesis. The protein is GTPase Der of Aromatoleum aromaticum (strain DSM 19018 / LMG 30748 / EbN1) (Azoarcus sp. (strain EbN1)).